The chain runs to 588 residues: Neuropeptide-like 1 (588 aa).

Positions 1–179 (MQCIPKKTFM…DPEVLEYSPD (179 aa)) are excised as a propeptide. The segment at 115–143 (NGDLPITIQERESDNDDEEKRSASSSDNV) is disordered. Threonine 194 is modified (threonine amide). Serine amide occurs at positions 210, 227, and 244. A Tyrosine amide modification is found at tyrosine 260. Glutamate 281 is subject to Glutamic acid 1-amide. A propeptide spanning residues 285–299 (SIASLARSGDWPSVA) is cleaved from the precursor. Tyrosine 318 bears the Tyrosine amide mark. Residues 321–588 (SLSDDREAPS…SNSHIAPRSM (268 aa)) constitute a propeptide that is removed on maturation. The disordered stretch occupies residues 342 to 382 (GNSEGKENEWQATPFTVSEDLDEGKAKNRSNRRIEASQTRH).

The protein localises to the secreted. This Camponotus floridanus (Florida carpenter ant) protein is Neuropeptide-like 1.